Consider the following 659-residue polypeptide: 1,4-alpha-glucan branching enzyme GlgB 2 (659 aa).

Residues 1-26 are disordered; sequence MRNYKELKHEKNGNVTEKIGENKGKS. The active-site Nucleophile is the Asp337. Glu390 serves as the catalytic Proton donor.

Belongs to the glycosyl hydrolase 13 family. GlgB subfamily. In terms of assembly, monomer.

The catalysed reaction is Transfers a segment of a (1-&gt;4)-alpha-D-glucan chain to a primary hydroxy group in a similar glucan chain.. Its pathway is glycan biosynthesis; glycogen biosynthesis. Functionally, catalyzes the formation of the alpha-1,6-glucosidic linkages in glycogen by scission of a 1,4-alpha-linked oligosaccharide from growing alpha-1,4-glucan chains and the subsequent attachment of the oligosaccharide to the alpha-1,6 position. The polypeptide is 1,4-alpha-glucan branching enzyme GlgB 2 (Clostridium perfringens (strain SM101 / Type A)).